An 881-amino-acid chain; its full sequence is Putative cation exchanger C521.04c (881 aa).

The span at 1–19 (MSQPADINQSESSAETITQ) shows a compositional bias: polar residues. Disordered stretches follow at residues 1 to 39 (MSQPADINQSESSAETITQGRRADRPEETPSSSVYEQNL) and 52 to 142 (ADAT…LRSE). The span at 63–77 (NDRDIYSPREIDQYT) shows a compositional bias: basic and acidic residues. A compositionally biased stretch (polar residues) spans 83 to 95 (RTDPSTSTISNAR). Low complexity predominate over residues 99–113 (RNSVSRLSRSSSNVR). Position 129 is a phosphoserine (S129). A run of 8 helical transmembrane segments spans residues 200 to 220 (IWLICFGAPLFLVIFICYIFF), 329 to 349 (LIIAPTLLITSAICMFTIFFV), 407 to 427 (IYIIYFDMLALIIPTIFFGFF), 438 to 458 (VFLFTASLVSIIPLAYFIGMA), 471 to 491 (GAFINAFFGSVIEVFLYSVAL), 504 to 524 (IGSILAGLLLMPGLSMCAGAI), 537 to 557 (GATSTMLLFAVLGAFAPTMLF), and 594 to 614 (LPFTYCCSIMLVLAYAIGLWF). Positions 641 to 717 (VGEPVNQDTA…SQNSHGDDAP (77 aa)) are disordered. Residues 646-657 (NQDTAGNMSDSS) show a composition bias toward polar residues. The span at 678–688 (SSGLSSNGSEN) shows a compositional bias: low complexity. 5 helical membrane passes run 726–746 (IILLSATFLYSLIAEILVEHV), 762–782 (LTLFALVPNTTEFMNAISFAL), 794–814 (SAYALQVCLLQIPCLMGYSLF), 828–848 (LFTMVFPTWDMICVMICVFLL), and 859–879 (YFKGSILVLAYLVSMLGFTFF).

It belongs to the Ca(2+):cation antiporter (CaCA) (TC 2.A.19) family.

The protein localises to the endoplasmic reticulum membrane. Its function is as follows. Putative cation exchanger. This chain is Putative cation exchanger C521.04c, found in Schizosaccharomyces pombe (strain 972 / ATCC 24843) (Fission yeast).